The primary structure comprises 397 residues: MTTLLNPYFGEFGGMYVPQILMPALRQLEEAFVSAQKDPQFQAQFADLLKNYAGRPTALTKCQNITAGTKTTLYLKREDLLHGGAHKTNQVLGQALLAKRMGKTEIIAETGAGQHGVASALASALLGLKCRIYMGAKDVERQSPNVFRMRLMGAEVIPVHSGSATLKDACNEALRDWSGSYESAHYMLGTAAGPHPFPTIVREFQRMIGEETKAQILEKEGRLPDAVIACVGGGSNAIGMFADFINETSVGLIGVEPGGHGIETGEHGAPLKHGRVGIYFGMKAPMMQTEEGQIEESYSISAGLDFPSVGPQHAYLNSIGRADYVSITDDEALEAFKTLCLHEGIIPALESSHALAHALKMMRENPEKEQLLVVNLSGRGDKDIFTVHDILKARGEI.

Lys87 carries the N6-(pyridoxal phosphate)lysine modification.

The protein belongs to the TrpB family. As to quaternary structure, tetramer of two alpha and two beta chains. Pyridoxal 5'-phosphate serves as cofactor.

It carries out the reaction (1S,2R)-1-C-(indol-3-yl)glycerol 3-phosphate + L-serine = D-glyceraldehyde 3-phosphate + L-tryptophan + H2O. Its pathway is amino-acid biosynthesis; L-tryptophan biosynthesis; L-tryptophan from chorismate: step 5/5. The beta subunit is responsible for the synthesis of L-tryptophan from indole and L-serine. This Citrobacter koseri (strain ATCC BAA-895 / CDC 4225-83 / SGSC4696) protein is Tryptophan synthase beta chain.